Reading from the N-terminus, the 412-residue chain is Multifunctional CCA protein (412 aa).

Positions 8 and 11 each coordinate ATP. Gly-8 and Arg-11 together coordinate CTP. Mg(2+) contacts are provided by Asp-21 and Asp-23. The ATP site is built by Arg-91, Arg-137, and Arg-140. Residues Arg-91, Arg-137, and Arg-140 each coordinate CTP. An HD domain is found at 228-329 (TGIHTLMTLS…VKLFDSIDAW (102 aa)).

This sequence belongs to the tRNA nucleotidyltransferase/poly(A) polymerase family. Bacterial CCA-adding enzyme type 1 subfamily. In terms of assembly, monomer. Can also form homodimers and oligomers. Mg(2+) serves as cofactor. It depends on Ni(2+) as a cofactor.

It catalyses the reaction a tRNA precursor + 2 CTP + ATP = a tRNA with a 3' CCA end + 3 diphosphate. The enzyme catalyses a tRNA with a 3' CCA end + 2 CTP + ATP = a tRNA with a 3' CCACCA end + 3 diphosphate. Its function is as follows. Catalyzes the addition and repair of the essential 3'-terminal CCA sequence in tRNAs without using a nucleic acid template. Adds these three nucleotides in the order of C, C, and A to the tRNA nucleotide-73, using CTP and ATP as substrates and producing inorganic pyrophosphate. tRNA 3'-terminal CCA addition is required both for tRNA processing and repair. Also involved in tRNA surveillance by mediating tandem CCA addition to generate a CCACCA at the 3' terminus of unstable tRNAs. While stable tRNAs receive only 3'-terminal CCA, unstable tRNAs are marked with CCACCA and rapidly degraded. This Escherichia coli O139:H28 (strain E24377A / ETEC) protein is Multifunctional CCA protein.